A 277-amino-acid chain; its full sequence is Large ribosomal subunit protein uL2 (277 aa).

The interval 226–277 is disordered; the sequence is MNPVDHPHGGGEGRSPIGMPSPVTPWGKPTLGYKTRKPNKKSDRLIVSRRKK.

This sequence belongs to the universal ribosomal protein uL2 family. Part of the 50S ribosomal subunit. Forms a bridge to the 30S subunit in the 70S ribosome.

In terms of biological role, one of the primary rRNA binding proteins. Required for association of the 30S and 50S subunits to form the 70S ribosome, for tRNA binding and peptide bond formation. It has been suggested to have peptidyltransferase activity; this is somewhat controversial. Makes several contacts with the 16S rRNA in the 70S ribosome. This Symbiobacterium thermophilum (strain DSM 24528 / JCM 14929 / IAM 14863 / T) protein is Large ribosomal subunit protein uL2.